A 1531-amino-acid chain; its full sequence is Nuclear factor of activated T-cells 5 (1531 aa).

Disordered regions lie at residues 34 to 89 (ELQL…TSSS) and 114 to 141 (VSNR…RHTV). Over residues 41 to 51 (RETSVASMSQT) the composition is skewed to polar residues. The span at 63 to 89 (VVAADASSAPSSSSMGGACSSFTTSSS) shows a compositional bias: low complexity. Serine 120 is subject to Phosphoserine. Lysine 122 bears the N6-acetyllysine mark. Positions 122 to 134 (KQLTSNTVQQHPS) are enriched in polar residues. Serine 134 carries the phosphoserine modification. Threonine 135 carries the phosphothreonine; by CDK5 modification. Serine 155 carries the phosphoserine modification. Disordered stretches follow at residues 175–220 (WMED…CEES) and 241–265 (TTDN…GVKK). Residues 179-192 (SPSNFSNMSTSSYN) show a composition bias toward low complexity. The segment covering 200-212 (KSRKRNPKQRPGV) has biased composition (basic residues). Residues 241–260 (TTDNKGNSKAGNGTLENQKG) are compositionally biased toward polar residues. The 180-residue stretch at 264–443 (KKSPMLCGQY…SPILCTQPAG (180 aa)) folds into the RHD domain. The DNA-binding element occupies 293–300 (RARYLTEG). Lysine 556 participates in a covalent cross-link: Glycyl lysine isopeptide (Lys-Gly) (interchain with G-Cter in SUMO1); alternate. Residue lysine 556 forms a Glycyl lysine isopeptide (Lys-Gly) (interchain with G-Cter in SUMO2); alternate linkage. Serine 561 is modified (phosphoserine). Glycyl lysine isopeptide (Lys-Gly) (interchain with G-Cter in SUMO2) cross-links involve residues lysine 573 and lysine 603. Disordered stretches follow at residues 640–666 (NIAG…QQIQ), 841–891 (VSPG…QVME), 958–996 (PPAV…TGTQ), 1211–1304 (PQVA…QEQQ), 1316–1371 (APMN…QEQQ), and 1473–1502 (ISQP…SPLA). The span at 646–656 (SFSSPSSSHLP) shows a compositional bias: low complexity. Composition is skewed to polar residues over residues 841 to 852 (VSPGMFSSTEPT) and 869 to 878 (HPQSENTLSN). Low complexity-rich tracts occupy residues 879 to 888 (QQQQQQQQQQ) and 960 to 980 (AVSG…PGTT). Polar residues-rich tracts occupy residues 981–996 (MFQT…TGTQ) and 1224–1247 (PQSQ…NSPS). A compositionally biased stretch (low complexity) spans 1248 to 1266 (QEQQQQQQQQQQQQQQQQQ). Polar residues-rich tracts occupy residues 1267 to 1278 (SILFSNQNTMAT) and 1291 to 1304 (FNPN…QEQQ). Positions 1320–1330 (QEQQPMQFQSQ) are enriched in low complexity. The segment covering 1331–1371 (STVSSLQNPGPTQSESSQTPLFHSSPQIQLVQGSPSSQEQQ) has biased composition (polar residues). Over residues 1475-1486 (QPGQPQNEGQPP) the composition is skewed to low complexity. The span at 1487 to 1502 (VTTLLSQQMPENSPLA) shows a compositional bias: polar residues.

In terms of assembly, homodimer when bound to DNA, completely encircles its DNA target. Interacts with CIDEC; this interaction is direct and retains NFAT5 in the cytoplasm. Does not bind with Fos and Jun transcription factors. Interacts with DDX5 and DDX17; this interaction leads to DDX5/DDX17 recruitment to LNC2 and S100A4 promoters and NFAT5-mediated DDX5/DDX17-enhanced transactivation. Phosphorylated. Phosphorylated at Thr-135 by CDK5 in response to osmotic stress; this phosphorylation mediates its rapid nuclear localization. Post-translationally, poly-ADP-ribosylated by PARP1 in response to DNA damage, promoting recruitment to sites of R-loop-associated DNA damage. Widely expressed, with highest levels in skeletal muscle, brain, heart and peripheral blood leukocytes.

The protein localises to the nucleus. Its subcellular location is the cytoplasm. It localises to the chromosome. Transcription factor involved, among others, in the transcriptional regulation of osmoprotective and inflammatory genes. Binds the DNA consensus sequence 5'-[ACT][AG]TGGAAA[CAT]A[TA][ATC][CA][ATG][GT][GAC][CG][CT]-3'. Mediates the transcriptional response to hypertonicity. Positively regulates the transcription of LCN2 and S100A4 genes; optimal transactivation of these genes requires the presence of DDX5/DDX17. Also involved in the DNA damage response by preventing formation of R-loops; R-loops are composed of a DNA:RNA hybrid and the associated non-template single-stranded DNA. The chain is Nuclear factor of activated T-cells 5 from Homo sapiens (Human).